The chain runs to 433 residues: Histidinol dehydrogenase (433 aa).

NAD(+) is bound by residues Tyr-129, Gln-191, and Asn-214. Substrate-binding residues include Ser-237, Gln-259, and His-262. Zn(2+)-binding residues include Gln-259 and His-262. Catalysis depends on proton acceptor residues Glu-326 and His-327. His-327, Asp-360, Glu-414, and His-419 together coordinate substrate. Position 360 (Asp-360) interacts with Zn(2+). His-419 is a Zn(2+) binding site.

This sequence belongs to the histidinol dehydrogenase family. It depends on Zn(2+) as a cofactor.

It carries out the reaction L-histidinol + 2 NAD(+) + H2O = L-histidine + 2 NADH + 3 H(+). It participates in amino-acid biosynthesis; L-histidine biosynthesis; L-histidine from 5-phospho-alpha-D-ribose 1-diphosphate: step 9/9. In terms of biological role, catalyzes the sequential NAD-dependent oxidations of L-histidinol to L-histidinaldehyde and then to L-histidine. The protein is Histidinol dehydrogenase of Methanosarcina barkeri (strain Fusaro / DSM 804).